Reading from the N-terminus, the 108-residue chain is UPF0060 membrane protein YnfA (108 aa).

Residues 1 to 5 (MFKTT) are Periplasmic-facing. A helical transmembrane segment spans residues 6-26 (LLFFITALCEIIGCFLPWLWL). At 27–30 (KRNG) the chain is on the cytoplasmic side. The helical transmembrane segment at 31 to 51 (SIWLLLPAGVSLAFFVWLLTL) threads the bilayer. At 52–60 (HPAASGRVY) the chain is on the periplasmic side. Residues 61 to 81 (AAYGGVYVCTALLWLRFIDGV) form a helical membrane-spanning segment. The Cytoplasmic segment spans residues 82-84 (KLS). Residues 85–105 (LYDWSGALIALCGMLIIVAGW) traverse the membrane as a helical segment. At 106 to 108 (GRA) the chain is on the periplasmic side.

This sequence belongs to the UPF0060 family.

The protein localises to the cell inner membrane. The chain is UPF0060 membrane protein YnfA from Escherichia fergusonii (strain ATCC 35469 / DSM 13698 / CCUG 18766 / IAM 14443 / JCM 21226 / LMG 7866 / NBRC 102419 / NCTC 12128 / CDC 0568-73).